The primary structure comprises 220 residues: MKLNKYIDHTILKPETTQEQVEKILAEAKEYDFASVCVNPTWVALAAESLKDSDVKVCTVIGFPLGANTPAVKAFETKDAISNGADEIDVVINIGALKTGNYDLVLEDIKAVVAASGDKLVKVIIEACLLTDDEKVKACQLSQEAGADYVKTSTGFSTGGATVADVALMRKTVGPDMGVKASGGARSYEDAIAFIEAGASRIGASSGVAIMNGAQADGDY.

Asp-89 functions as the Proton donor/acceptor in the catalytic mechanism. The Schiff-base intermediate with acetaldehyde role is filled by Lys-151. Lys-180 (proton donor/acceptor) is an active-site residue.

This sequence belongs to the DeoC/FbaB aldolase family. DeoC type 1 subfamily.

It is found in the cytoplasm. The enzyme catalyses 2-deoxy-D-ribose 5-phosphate = D-glyceraldehyde 3-phosphate + acetaldehyde. It functions in the pathway carbohydrate degradation; 2-deoxy-D-ribose 1-phosphate degradation; D-glyceraldehyde 3-phosphate and acetaldehyde from 2-deoxy-alpha-D-ribose 1-phosphate: step 2/2. Catalyzes a reversible aldol reaction between acetaldehyde and D-glyceraldehyde 3-phosphate to generate 2-deoxy-D-ribose 5-phosphate. This is Deoxyribose-phosphate aldolase from Streptococcus suis (strain 98HAH33).